The chain runs to 359 residues: Acetoin catabolism protein X (359 aa).

Its subcellular location is the cell membrane. Its pathway is ketone degradation; acetoin degradation. Essential for acetoin catabolism. The polypeptide is Acetoin catabolism protein X (acoX) (Cupriavidus necator (strain ATCC 17699 / DSM 428 / KCTC 22496 / NCIMB 10442 / H16 / Stanier 337) (Ralstonia eutropha)).